The sequence spans 529 residues: Cytochrome P450 monooxygenase okaD (529 aa).

The helical transmembrane segment at 13–35 threads the bilayer; the sequence is LPAQHLLASLALVGALLSVGYLL. Residue Cys-435 participates in heme binding.

This sequence belongs to the cytochrome P450 family. It depends on heme as a cofactor.

The protein localises to the membrane. It carries out the reaction okaramine C + 2 reduced [NADPH--hemoprotein reductase] + 2 O2 = okaramine A + 2 oxidized [NADPH--hemoprotein reductase] + 4 H2O + 2 H(+). The protein operates within alkaloid biosynthesis. Its function is as follows. Cytochrome P450 monooxygenase; part of the gene cluster that mediates the biosynthesis of okaramine B, a prenylated indole alkaloid that possesses an unusual octacyclic ring system, including a four-membered azetidine ring and an eight-membered azocine ring, and that exhibits insecticidal activity against silkworm larvae. Within the pathway, okaD likely catalyzes a key step in forming the eight-membered ring of okaramine A using as substrate okaramine C. The biosynthesis begins with the NRPS okaA that condenses two tryptophan molecules into cyclo(L-Trp-L-Trp). Prenylation by the prenyltransferase okaC then leads to the formation of cyclo(N8-(alpha,alpha-dimethylallyl)-L-Trp-6a-(alpha,alpha-dime-thylallyl)-L-Trp). This is followed by indole 2,3-epoxidation by the FAD-dependent monooxygenase okaB to facilitate the formation of the hexahydropyrrolo[2,3-b]indole (HPI) moiety of okaramine C. The cytochrome P450 monooxygenase okaD then likely catalyzes formation of the eight-membered ring of okaramine A. The dioxygenase okaE further forms the unusual 2-dimethyl-3-methyl-azetidine ring to yield 12-deshydroxyl okaramine E, as well as the hydroxylation of 12-deshydroxyl okaramine E to produce okaramine E. The cytochrome P450 monoxygenase okaG converts 12-deshydroxyl okaramine E into 3-desmethyl okaramine B which is further methylated by the methyltransferase okaF into okaramine B. In a shunt pathway, okaG and okaF together are also able to convert okaramine E into okaramine D. Okaramine H is produced by nonenzymatic conversion from okaramine A. The sequence is that of Cytochrome P450 monooxygenase okaD from Penicillium ochrochloron.